The sequence spans 677 residues: Zinc finger protein 526 (677 aa).

3 consecutive C2H2-type zinc fingers follow at residues Phe57 to His79, Phe109 to His131, and Tyr141 to His164. The interval Thr167–Pro190 is disordered. Residues Pro172–Pro190 show a composition bias toward pro residues. The segment at Tyr198–His220 adopts a C2H2-type 4 zinc-finger fold. Basic and acidic residues predominate over residues Ser223–Leu232. Residues Ser223 to Ala300 form a disordered region. Acidic residues predominate over residues Glu233–Gly257. 4 consecutive C2H2-type zinc fingers follow at residues Phe304–His326, His331–His353, Tyr359–His381, and His387–His408. Residues His408–Leu449 form a disordered region. The span at Gly410 to Ala433 shows a compositional bias: low complexity. The span at Glu434–Leu449 shows a compositional bias: pro residues. C2H2-type zinc fingers lie at residues Leu449–His472, His479–His501, Phe507–His529, Tyr535–His557, and Tyr580–His602. Positions Leu608–Gln627 are disordered. Pro residues predominate over residues Pro613–Pro626.

It belongs to the krueppel C2H2-type zinc-finger protein family.

The protein resides in the nucleus. Its function is as follows. May be involved in transcriptional regulation. This chain is Zinc finger protein 526 (ZNF526), found in Bos taurus (Bovine).